The chain runs to 176 residues: Acireductone dioxygenase (176 aa).

Residues H91, H93, E97, and H136 each coordinate Fe(2+). Ni(2+) is bound by residues H91, H93, E97, and H136.

It belongs to the acireductone dioxygenase (ARD) family. In terms of assembly, monomer. The cofactor is Fe(2+). It depends on Ni(2+) as a cofactor.

It catalyses the reaction 1,2-dihydroxy-5-(methylsulfanyl)pent-1-en-3-one + O2 = 3-(methylsulfanyl)propanoate + CO + formate + 2 H(+). The enzyme catalyses 1,2-dihydroxy-5-(methylsulfanyl)pent-1-en-3-one + O2 = 4-methylsulfanyl-2-oxobutanoate + formate + 2 H(+). It functions in the pathway amino-acid biosynthesis; L-methionine biosynthesis via salvage pathway; L-methionine from S-methyl-5-thio-alpha-D-ribose 1-phosphate: step 5/6. Catalyzes 2 different reactions between oxygen and the acireductone 1,2-dihydroxy-3-keto-5-methylthiopentene (DHK-MTPene) depending upon the metal bound in the active site. Fe-containing acireductone dioxygenase (Fe-ARD) produces formate and 2-keto-4-methylthiobutyrate (KMTB), the alpha-ketoacid precursor of methionine in the methionine recycle pathway. Ni-containing acireductone dioxygenase (Ni-ARD) produces methylthiopropionate, carbon monoxide and formate, and does not lie on the methionine recycle pathway. The chain is Acireductone dioxygenase from Picosynechococcus sp. (strain ATCC 27264 / PCC 7002 / PR-6) (Agmenellum quadruplicatum).